A 172-amino-acid polypeptide reads, in one-letter code: 3-hydroxydecanoyl-[acyl-carrier-protein] dehydratase (172 aa).

His-71 is a catalytic residue.

Belongs to the thioester dehydratase family. FabA subfamily. As to quaternary structure, homodimer.

It is found in the cytoplasm. The catalysed reaction is a (3R)-hydroxyacyl-[ACP] = a (2E)-enoyl-[ACP] + H2O. It carries out the reaction (3R)-hydroxydecanoyl-[ACP] = (2E)-decenoyl-[ACP] + H2O. The enzyme catalyses (2E)-decenoyl-[ACP] = (3Z)-decenoyl-[ACP]. It participates in lipid metabolism; fatty acid biosynthesis. In terms of biological role, necessary for the introduction of cis unsaturation into fatty acids. Catalyzes the dehydration of (3R)-3-hydroxydecanoyl-ACP to E-(2)-decenoyl-ACP and then its isomerization to Z-(3)-decenoyl-ACP. Can catalyze the dehydratase reaction for beta-hydroxyacyl-ACPs with saturated chain lengths up to 16:0, being most active on intermediate chain length. The sequence is that of 3-hydroxydecanoyl-[acyl-carrier-protein] dehydratase from Vibrio parahaemolyticus serotype O3:K6 (strain RIMD 2210633).